Here is a 162-residue protein sequence, read N- to C-terminus: NADH-quinone oxidoreductase subunit I (162 aa).

4Fe-4S ferredoxin-type domains are found at residues 54–83 and 93–122; these read RRYE…IESE and TRYD…ETQI. Positions 63, 66, 69, 73, 102, 105, 108, and 112 each coordinate [4Fe-4S] cluster.

It belongs to the complex I 23 kDa subunit family. As to quaternary structure, NDH-1 is composed of 14 different subunits. Subunits NuoA, H, J, K, L, M, N constitute the membrane sector of the complex. [4Fe-4S] cluster serves as cofactor.

It localises to the cell inner membrane. It carries out the reaction a quinone + NADH + 5 H(+)(in) = a quinol + NAD(+) + 4 H(+)(out). Functionally, NDH-1 shuttles electrons from NADH, via FMN and iron-sulfur (Fe-S) centers, to quinones in the respiratory chain. The immediate electron acceptor for the enzyme in this species is believed to be ubiquinone. Couples the redox reaction to proton translocation (for every two electrons transferred, four hydrogen ions are translocated across the cytoplasmic membrane), and thus conserves the redox energy in a proton gradient. In Burkholderia cenocepacia (strain HI2424), this protein is NADH-quinone oxidoreductase subunit I.